The primary structure comprises 527 residues: Proline--tRNA ligase (527 aa).

Belongs to the class-II aminoacyl-tRNA synthetase family. ProS type 3 subfamily. As to quaternary structure, homodimer.

It is found in the cytoplasm. It catalyses the reaction tRNA(Pro) + L-proline + ATP = L-prolyl-tRNA(Pro) + AMP + diphosphate. Its function is as follows. Catalyzes the attachment of proline to tRNA(Pro) in a two-step reaction: proline is first activated by ATP to form Pro-AMP and then transferred to the acceptor end of tRNA(Pro). The polypeptide is Proline--tRNA ligase (Sphingopyxis alaskensis (strain DSM 13593 / LMG 18877 / RB2256) (Sphingomonas alaskensis)).